The chain runs to 266 residues: Glucosamine-6-phosphate deaminase (266 aa).

The Proton acceptor; for enolization step role is filled by Asp72. Catalysis depends on Asp141, which acts as the For ring-opening step. The active-site Proton acceptor; for ring-opening step is the His143. Catalysis depends on Glu148, which acts as the For ring-opening step.

It belongs to the glucosamine/galactosamine-6-phosphate isomerase family. NagB subfamily. In terms of assembly, homohexamer.

The enzyme catalyses alpha-D-glucosamine 6-phosphate + H2O = beta-D-fructose 6-phosphate + NH4(+). It functions in the pathway amino-sugar metabolism; N-acetylneuraminate degradation; D-fructose 6-phosphate from N-acetylneuraminate: step 5/5. With respect to regulation, allosterically activated by N-acetylglucosamine 6-phosphate (GlcNAc6P). In terms of biological role, catalyzes the reversible isomerization-deamination of glucosamine 6-phosphate (GlcN6P) to form fructose 6-phosphate (Fru6P) and ammonium ion. The chain is Glucosamine-6-phosphate deaminase from Aeromonas hydrophila subsp. hydrophila (strain ATCC 7966 / DSM 30187 / BCRC 13018 / CCUG 14551 / JCM 1027 / KCTC 2358 / NCIMB 9240 / NCTC 8049).